The sequence spans 329 residues: 2-oxoglutarate-dependent dioxygenase htyE (329 aa).

In terms of domain architecture, Fe2OG dioxygenase spans 175–289 (NTSELRLLHY…RYSVAYFGKP (115 aa)). The Fe cation site is built by histidine 201, aspartate 203, and histidine 261. Arginine 280 serves as a coordination point for 2-oxoglutarate.

It belongs to the iron/ascorbate-dependent oxidoreductase family. Fe(2+) is required as a cofactor.

It participates in antifungal biosynthesis. In terms of biological role, 2-oxoglutarate-dependent dioxygenase; part of the gene cluster that mediates the de novo generation of L-homotyrosine from acetyl-CoA and 4-hydroxyphenyl-pyruvate. L-homotyrosine is a building block of echinocandin B, a fungal lipidated cyclic hexapeptide that acts as an antifungal agent. L-homotyrosine 4-hydroxyphenyl-pyruvate first undergoes an aldol-type condensation by htyA with the C-2 of acetyl-CoA followed by the release of CoA to form 2-(4-hydroxybenzyl)-malate. This is followed by isomerization of 2-(4-hydroxy-benzyl)-malate to 3-(4-hydroxybenzyl)-malate by htyD. Thereafter, 3-(4-hydroxybenzyl)-malate undergoes decarboxylation and oxidation to form 2-oxo-4-(4-hydroxybenzyl)butanoic acid, coupled to reduction of NAD(+) to NADH by htyC. The product then undergoes transamination catalyzed by htyB to form L-homotyrosine. This Aspergillus rugulosus (Emericella rugulosa) protein is 2-oxoglutarate-dependent dioxygenase htyE.